The following is a 288-amino-acid chain: MKLQFTKMHGAGNDFIVLDGIHQKLDLTDAQWRALANRHFGIGADQILIVEKSSRDDVDFRYRIVNADGGEVEHCGNGARCFVRFVTDRGMTDKQSVRVEVMNGVITLKLQDDGQVTVDMGEPELTPARVPFIADGLPTRAEAQDTLYGLEVNGRTEWISPVSMGNPHAVQIVDDVEQFPVLQDGPVIEHHKSFPNRVNAGFMQIVDRNTVRLRVFERGAGETLACGTGACAAVVAGIRRGLLDSPVKVHTHGGDLTIAWQGAGQPVQMTGPATTVFEGTIDLSTLPA.

Asn-13, Gln-46, and Asn-66 together coordinate substrate. Cys-75 acts as the Proton donor in catalysis. Residues 76-77 (GN), Asn-166, Asn-199, and 217-218 (ER) each bind substrate. Cys-226 acts as the Proton acceptor in catalysis. Residue 227–228 (GT) coordinates substrate.

Belongs to the diaminopimelate epimerase family. As to quaternary structure, homodimer.

It is found in the cytoplasm. It catalyses the reaction (2S,6S)-2,6-diaminopimelate = meso-2,6-diaminopimelate. The protein operates within amino-acid biosynthesis; L-lysine biosynthesis via DAP pathway; DL-2,6-diaminopimelate from LL-2,6-diaminopimelate: step 1/1. In terms of biological role, catalyzes the stereoinversion of LL-2,6-diaminopimelate (L,L-DAP) to meso-diaminopimelate (meso-DAP), a precursor of L-lysine and an essential component of the bacterial peptidoglycan. This Cupriavidus metallidurans (strain ATCC 43123 / DSM 2839 / NBRC 102507 / CH34) (Ralstonia metallidurans) protein is Diaminopimelate epimerase.